A 274-amino-acid polypeptide reads, in one-letter code: Large ribosomal subunit protein uL2cz/uL2cy (274 aa).

Disordered stretches follow at residues 1 to 23 (MAIH…SQVK) and 224 to 274 (NPVD…RRSK).

This sequence belongs to the universal ribosomal protein uL2 family. In terms of assembly, part of the 50S ribosomal subunit.

Its subcellular location is the plastid. It localises to the chloroplast. The protein is Large ribosomal subunit protein uL2cz/uL2cy (rpl2-A) of Vitis vinifera (Grape).